Here is a 275-residue protein sequence, read N- to C-terminus: Uroplakin-3b (275 aa).

The N-terminal stretch at 1–26 (MVRTRWQPPLRALLLLVLVWLPQSLS) is a signal peptide. Residues 27–196 (LDLIAYVPQI…DTWPGRRSGC (170 aa)) lie on the Lumenal side of the membrane. N-linked (GlcNAc...) asparagine glycosylation occurs at N77. Residues 197-217 (MIVITSILSALAGLLLLAFLA) traverse the membrane as a helical segment. The Cytoplasmic segment spans residues 218-275 (ASTTRFSSLWWPEEAPEQLRIGSFMGKRYMTHHIPPSEAATLPVGCEPGLDPLPSLSP).

The protein belongs to the uroplakin-3 family. In terms of assembly, heterodimer with uroplakin-1B (UPK1B). Expression is urothelium-specific.

The protein localises to the cell membrane. Its function is as follows. Component of the asymmetric unit membrane (AUM); a highly specialized biomembrane elaborated by terminally differentiated urothelial cells. May play an important role in AUM-cytoskeleton interaction in terminally differentiated urothelial cells. It also contributes to the formation of urothelial glycocalyx which may play an important role in preventing bacterial adherence. This Mus musculus (Mouse) protein is Uroplakin-3b (Upk3b).